A 286-amino-acid polypeptide reads, in one-letter code: Elongation factor Ts (286 aa).

An involved in Mg(2+) ion dislocation from EF-Tu region spans residues 79–82 (TDFV).

It belongs to the EF-Ts family.

The protein localises to the cytoplasm. In terms of biological role, associates with the EF-Tu.GDP complex and induces the exchange of GDP to GTP. It remains bound to the aminoacyl-tRNA.EF-Tu.GTP complex up to the GTP hydrolysis stage on the ribosome. The protein is Elongation factor Ts of Wolbachia pipientis wMel.